A 420-amino-acid polypeptide reads, in one-letter code: Glutaryl-CoA dehydrogenase, mitochondrial (420 aa).

125 to 126 (RS) serves as a coordination point for substrate. Residues 164 to 167 (FGLT), S173, and 198 to 200 (WIT) contribute to the FAD site. Residue S173 participates in substrate binding. Residues 273 to 277 (FSCLN) and R280 each bind substrate. The active-site Proton acceptor is E400. Residues T402 and F420 each contribute to the FAD site.

It belongs to the acyl-CoA dehydrogenase family. FAD is required as a cofactor.

The protein resides in the mitochondrion matrix. It catalyses the reaction glutaryl-CoA + oxidized [electron-transfer flavoprotein] + 2 H(+) = (2E)-butenoyl-CoA + reduced [electron-transfer flavoprotein] + CO2. It functions in the pathway amino-acid metabolism; lysine degradation. Its pathway is amino-acid metabolism; tryptophan metabolism. The protein is Glutaryl-CoA dehydrogenase, mitochondrial (gcdh) of Dictyostelium discoideum (Social amoeba).